A 543-amino-acid chain; its full sequence is Chaperonin GroEL (543 aa).

ATP is bound by residues 29–32 (TLGP), 86–90 (DGTTT), Gly413, 476–478 (NAA), and Asp492.

It belongs to the chaperonin (HSP60) family. Forms a cylinder of 14 subunits composed of two heptameric rings stacked back-to-back. Interacts with the co-chaperonin GroES.

It localises to the cytoplasm. It carries out the reaction ATP + H2O + a folded polypeptide = ADP + phosphate + an unfolded polypeptide.. In terms of biological role, together with its co-chaperonin GroES, plays an essential role in assisting protein folding. The GroEL-GroES system forms a nano-cage that allows encapsulation of the non-native substrate proteins and provides a physical environment optimized to promote and accelerate protein folding. The protein is Chaperonin GroEL of Streptococcus pyogenes serotype M49 (strain NZ131).